Here is a 596-residue protein sequence, read N- to C-terminus: MGRGARAAAAQSRWGRASRASVSPGRTIRSAPAVGEAQETEAAPEKENRVDVGAEERAAATRPRQKSWLVRHFSLLLRRDRQAQKAGQLFSGLLALNVVFLGGAFICSMIFNKVAVTLGDVWILLATLKVLSLLWLLYYVASTTRRPHAVLYQDPHAGPLWVRGSLVLFGSCTFCLNIFRVGYDVSHIRCKSQLDLVFSVIEMVFIGVQTWVLWKHCKDCVRVQTNFTRCGLMLTLATNLLLWVLAVTNDSMHREIEAELGILMEKSTGNETNTCLCLNATACEAFRRGFLMLYPFSTEYCLICCAVLFVMWKNVGRHVAPHMGAHPATAPFHLHGAIFGPLLGLLVLLAGVCVFVLFQIEASGPAIACQYFTLYYAFYVAVLPTMSLACLAGTAIHGLEERELDTVKNPTRSLDVVLLMGAALGQMGIAYFSIVAIVAKRPHELLNRLILAYSLLLILQHIAQNLFIIEGLHRRPLWETVPEGLAGKQEAEPPRRGSLLELGQGLQRASLAYIHSYSHLNWKRRALKEISLFLILCNITLWMMPAFGIHPEFENGLEKDFYGYQIWFAIVNFGLPLGVFYRMHSVGGLVEVYLGA.

Residues 1–21 show a composition bias toward low complexity; the sequence is MGRGARAAAAQSRWGRASRAS. The tract at residues 1–59 is disordered; sequence MGRGARAAAAQSRWGRASRASVSPGRTIRSAPAVGEAQETEAAPEKENRVDVGAEERAA. Residues 1–88 are Cytoplasmic-facing; it reads MGRGARAAAA…RDRQAQKAGQ (88 aa). Serine 21 and serine 23 each carry phosphoserine. The segment covering 43-59 has biased composition (basic and acidic residues); that stretch reads APEKENRVDVGAEERAA. Residues 89–109 traverse the membrane as a helical segment; it reads LFSGLLALNVVFLGGAFICSM. Residues 110–119 are Extracellular-facing; the sequence is IFNKVAVTLG. Residues 120–143 traverse the membrane as a helical segment; sequence DVWILLATLKVLSLLWLLYYVAST. The Cytoplasmic portion of the chain corresponds to 144–159; that stretch reads TRRPHAVLYQDPHAGP. Residues 160-181 traverse the membrane as a helical segment; the sequence is LWVRGSLVLFGSCTFCLNIFRV. Residues 182–193 are Extracellular-facing; that stretch reads GYDVSHIRCKSQ. The chain crosses the membrane as a helical span at residues 194–217; sequence LDLVFSVIEMVFIGVQTWVLWKHC. Residues 218 to 225 lie on the Cytoplasmic side of the membrane; the sequence is KDCVRVQT. A helical membrane pass occupies residues 226–248; sequence NFTRCGLMLTLATNLLLWVLAVT. Over 249-295 the chain is Extracellular; that stretch reads NDSMHREIEAELGILMEKSTGNETNTCLCLNATACEAFRRGFLMLYP. Residues 296–312 form a helical membrane-spanning segment; sequence FSTEYCLICCAVLFVMW. Topologically, residues 313–338 are cytoplasmic; it reads KNVGRHVAPHMGAHPATAPFHLHGAI. A helical transmembrane segment spans residues 339–358; sequence FGPLLGLLVLLAGVCVFVLF. At 359–372 the chain is on the extracellular side; the sequence is QIEASGPAIACQYF. A helical membrane pass occupies residues 373-395; that stretch reads TLYYAFYVAVLPTMSLACLAGTA. At 396-413 the chain is on the cytoplasmic side; the sequence is IHGLEERELDTVKNPTRS. Residues 414 to 435 form a helical membrane-spanning segment; sequence LDVVLLMGAALGQMGIAYFSIV. At 436 to 446 the chain is on the extracellular side; that stretch reads AIVAKRPHELL. The helical transmembrane segment at 447-469 threads the bilayer; the sequence is NRLILAYSLLLILQHIAQNLFII. Over 470–529 the chain is Cytoplasmic; it reads EGLHRRPLWETVPEGLAGKQEAEPPRRGSLLELGQGLQRASLAYIHSYSHLNWKRRALKE. A helical transmembrane segment spans residues 530 to 547; the sequence is ISLFLILCNITLWMMPAF. The Extracellular segment spans residues 548–566; that stretch reads GIHPEFENGLEKDFYGYQI. Residues 567 to 589 traverse the membrane as a helical segment; that stretch reads WFAIVNFGLPLGVFYRMHSVGGL. The Cytoplasmic portion of the chain corresponds to 590–596; the sequence is VEVYLGA.

It belongs to the otopetrin family. Homodimer.

The protein localises to the cell membrane. It catalyses the reaction H(+)(in) = H(+)(out). Its activity is regulated as follows. Activated by extracellular acidification. Activated by Zn(2+) under non-acidic conditions. Its function is as follows. Proton-selective channel gated by extracellular protons. The chain is Proton channel OTOP3 from Homo sapiens (Human).